The sequence spans 561 residues: Putative periplasmic trehalase (561 aa).

Positions M1–A30 are cleaved as a signal peptide. Residues R148, W155 to D156, N192, R201 to Q203, R273 to E275, and G306 contribute to the substrate site. Residues D308 and E492 each act as proton donor/acceptor in the active site. E507 is a substrate binding site. The interval C535–P561 is disordered.

It belongs to the glycosyl hydrolase 37 family. Monomer.

The protein localises to the periplasm. The enzyme catalyses alpha,alpha-trehalose + H2O = alpha-D-glucose + beta-D-glucose. Provides the cells with the ability to utilize trehalose at high osmolarity by splitting it into glucose molecules that can subsequently be taken up by the phosphotransferase-mediated uptake system. The protein is Putative periplasmic trehalase of Escherichia coli O157:H7.